The primary structure comprises 562 residues: NAD-dependent malic enzyme (562 aa).

The active-site Proton donor is Tyr101. Arg154 serves as a coordination point for NAD(+). Lys172 acts as the Proton acceptor in catalysis. Residues Glu243, Asp244, and Asp267 each coordinate a divalent metal cation. NAD(+) is bound by residues Asp267 and Asn415.

Belongs to the malic enzymes family. Homotetramer. Mg(2+) is required as a cofactor. The cofactor is Mn(2+).

It carries out the reaction (S)-malate + NAD(+) = pyruvate + CO2 + NADH. The catalysed reaction is oxaloacetate + H(+) = pyruvate + CO2. This chain is NAD-dependent malic enzyme, found in Shewanella sp. (strain MR-4).